The primary structure comprises 499 residues: NADH-quinone oxidoreductase subunit 14 (499 aa).

14 consecutive transmembrane segments (helical) span residues 9 to 29, 37 to 57, 76 to 96, 104 to 124, 126 to 146, 161 to 181, 196 to 216, 235 to 255, 269 to 289, 301 to 321, 324 to 344, 369 to 389, 402 to 422, and 446 to 466; these read ILPEVVLAGYALAALMAGAYL, TLLWVTVAAFLVVAAMVGLGN, FAKVVTLVAAAGVLAMSADYM, FEFPIIVALAVLGMMFMVSAG, LLTLYMGLELQSLALYVVAAM, FVLGSLSSGLLLYGASLVYGF, AGHLSLGVLFGLVFMLVGLSF, PTPVTAFFATAPKVAAMALIA, WSQIVAALAVMSMFLGSIAGI, SSIAHMGFALVGLAAGTAIGV, MLLYMTIYAVMNIGTFAFILS, ALAMLVLMFSLAGVPPTLGFF, GMGWLAVLGVIASVIGAFYYL, and YLALMVPALAMLVGAISMFGV.

It belongs to the complex I subunit 2 family. As to quaternary structure, NDH-1 is composed of at least 14 different subunits, Nqo1 to Nqo14. The complex has a L-shaped structure, with the hydrophobic arm (subunits Nqo7, Nqo8, Nqo10 to Nqo14) embedded in the inner membrane and the hydrophilic peripheral arm (subunits Nqo1 to Nqo6, Nqo9) protruding into the bacterial cytoplasm. The hydrophilic domain contains all the redox centers.

The protein resides in the cell inner membrane. It catalyses the reaction a quinone + NADH + 5 H(+)(in) = a quinol + NAD(+) + 4 H(+)(out). Its function is as follows. NDH-1 shuttles electrons from NADH, via FMN and iron-sulfur (Fe-S) centers, to quinones in the respiratory chain. The immediate electron acceptor for the enzyme in this species is believed to be ubiquinone. Couples the redox reaction to proton translocation (for every two electrons transferred, four hydrogen ions are translocated across the cytoplasmic membrane), and thus conserves the redox energy in a proton gradient. The chain is NADH-quinone oxidoreductase subunit 14 from Paracoccus denitrificans.